Reading from the N-terminus, the 39-residue chain is Larval cuticle protein SC6 (39 aa).

Residues 15–39 enclose the Chitin-binding type R&amp;R domain; sequence VDQFKYGLELDNSIKADQEGHLEGD.

Component of the cuticle of the larva of flesh fly. The polypeptide is Larval cuticle protein SC6 (Sarcophaga bullata (Grey flesh fly)).